The chain runs to 509 residues: tRNA-2-methylthio-N(6)-dimethylallyladenosine synthase (509 aa).

Residues 1–15 (MNEQQRLASQQVNSS) are compositionally biased toward polar residues. Positions 1–26 (MNEQQRLASQQVNSSTKKEEKDYSKY) are disordered. The span at 16–25 (TKKEEKDYSK) shows a compositional bias: basic and acidic residues. One can recognise an MTTase N-terminal domain in the interval 66 to 184 (RKFYIRTYGC…LPYILKDAMF (119 aa)). [4Fe-4S] cluster contacts are provided by Cys-75, Cys-111, Cys-145, Cys-221, Cys-225, and Cys-228. The Radical SAM core domain occupies 207-437 (RRGDIKAWVN…NALVNKLAIE (231 aa)). A TRAM domain is found at 440–503 (NRYKGQIVEV…TWSLNGELVE (64 aa)).

The protein belongs to the methylthiotransferase family. MiaB subfamily. In terms of assembly, monomer. Requires [4Fe-4S] cluster as cofactor.

The protein localises to the cytoplasm. The catalysed reaction is N(6)-dimethylallyladenosine(37) in tRNA + (sulfur carrier)-SH + AH2 + 2 S-adenosyl-L-methionine = 2-methylsulfanyl-N(6)-dimethylallyladenosine(37) in tRNA + (sulfur carrier)-H + 5'-deoxyadenosine + L-methionine + A + S-adenosyl-L-homocysteine + 2 H(+). Catalyzes the methylthiolation of N6-(dimethylallyl)adenosine (i(6)A), leading to the formation of 2-methylthio-N6-(dimethylallyl)adenosine (ms(2)i(6)A) at position 37 in tRNAs that read codons beginning with uridine. The chain is tRNA-2-methylthio-N(6)-dimethylallyladenosine synthase from Bacillus cereus (strain AH187).